The chain runs to 366 residues: Protein RecA (366 aa).

81–88 contributes to the ATP binding site; the sequence is GPESSGKT.

Belongs to the RecA family.

The protein localises to the cytoplasm. In terms of biological role, can catalyze the hydrolysis of ATP in the presence of single-stranded DNA, the ATP-dependent uptake of single-stranded DNA by duplex DNA, and the ATP-dependent hybridization of homologous single-stranded DNAs. It interacts with LexA causing its activation and leading to its autocatalytic cleavage. This Leptospira interrogans serogroup Icterohaemorrhagiae serovar copenhageni (strain Fiocruz L1-130) protein is Protein RecA.